The sequence spans 400 residues: Elongation factor Tu (400 aa).

The region spanning 10–208 (KPHVNVGTIG…AMDNYIPDPQ (199 aa)) is the tr-type G domain. Positions 19–26 (GHIDHGKS) are G1. Position 19 to 26 (19 to 26 (GHIDHGKS)) interacts with GTP. Serine 26 contributes to the Mg(2+) binding site. The tract at residues 60–64 (GITIN) is G2. The tract at residues 81–84 (DCPG) is G3. GTP is bound by residues 81-85 (DCPGH) and 136-139 (NKTD). The tract at residues 136–139 (NKTD) is G4. The tract at residues 174–176 (SAL) is G5.

The protein belongs to the TRAFAC class translation factor GTPase superfamily. Classic translation factor GTPase family. EF-Tu/EF-1A subfamily. As to quaternary structure, monomer.

The protein resides in the cytoplasm. It catalyses the reaction GTP + H2O = GDP + phosphate + H(+). In terms of biological role, GTP hydrolase that promotes the GTP-dependent binding of aminoacyl-tRNA to the A-site of ribosomes during protein biosynthesis. The sequence is that of Elongation factor Tu from Thermotoga neapolitana (strain ATCC 49049 / DSM 4359 / NBRC 107923 / NS-E).